Reading from the N-terminus, the 212-residue chain is Imidazole glycerol phosphate synthase subunit HisH (212 aa).

The Glutamine amidotransferase type-1 domain maps to 1–210; it reads MIAVINYGAG…VRWSEAVQPK (210 aa). Cys79 (nucleophile) is an active-site residue. Active-site residues include His185 and Glu187.

In terms of assembly, heterodimer of HisH and HisF.

It is found in the cytoplasm. It carries out the reaction 5-[(5-phospho-1-deoxy-D-ribulos-1-ylimino)methylamino]-1-(5-phospho-beta-D-ribosyl)imidazole-4-carboxamide + L-glutamine = D-erythro-1-(imidazol-4-yl)glycerol 3-phosphate + 5-amino-1-(5-phospho-beta-D-ribosyl)imidazole-4-carboxamide + L-glutamate + H(+). It catalyses the reaction L-glutamine + H2O = L-glutamate + NH4(+). It participates in amino-acid biosynthesis; L-histidine biosynthesis; L-histidine from 5-phospho-alpha-D-ribose 1-diphosphate: step 5/9. In terms of biological role, IGPS catalyzes the conversion of PRFAR and glutamine to IGP, AICAR and glutamate. The HisH subunit catalyzes the hydrolysis of glutamine to glutamate and ammonia as part of the synthesis of IGP and AICAR. The resulting ammonia molecule is channeled to the active site of HisF. The polypeptide is Imidazole glycerol phosphate synthase subunit HisH (Chloroflexus aurantiacus (strain ATCC 29364 / DSM 637 / Y-400-fl)).